The following is a 678-amino-acid chain: UvrABC system protein B (678 aa).

Positions 26-185 (EGLEDGEAFQ…LTTMQYTRND (160 aa)) constitute a Helicase ATP-binding domain. 39–46 (GVTGSGKT) provides a ligand contact to ATP. The Beta-hairpin motif lies at 92–115 (YYDYYQPEAYVPASDTYIAKDSSV). A Helicase C-terminal domain is found at 430–596 (QVDDLLGEIR…KLNKKITDIL (167 aa)). Residues 597 to 630 (EDSPYAPKPGASAAKLKAAEADGEYSPQEMQRMT) are disordered. In terms of domain architecture, UVR spans 635 to 670 (ASEIKRMEKQMYQAAKDLDFELAAKLRDDLKRLKSS).

It belongs to the UvrB family. Forms a heterotetramer with UvrA during the search for lesions. Interacts with UvrC in an incision complex.

Its subcellular location is the cytoplasm. The UvrABC repair system catalyzes the recognition and processing of DNA lesions. A damage recognition complex composed of 2 UvrA and 2 UvrB subunits scans DNA for abnormalities. Upon binding of the UvrA(2)B(2) complex to a putative damaged site, the DNA wraps around one UvrB monomer. DNA wrap is dependent on ATP binding by UvrB and probably causes local melting of the DNA helix, facilitating insertion of UvrB beta-hairpin between the DNA strands. Then UvrB probes one DNA strand for the presence of a lesion. If a lesion is found the UvrA subunits dissociate and the UvrB-DNA preincision complex is formed. This complex is subsequently bound by UvrC and the second UvrB is released. If no lesion is found, the DNA wraps around the other UvrB subunit that will check the other stand for damage. This is UvrABC system protein B from Hydrogenovibrio crunogenus (strain DSM 25203 / XCL-2) (Thiomicrospira crunogena).